Reading from the N-terminus, the 269-residue chain is Formamidopyrimidine-DNA glycosylase (269 aa).

The active-site Schiff-base intermediate with DNA is the proline 2. Residue glutamate 3 is the Proton donor of the active site. Lysine 57 (proton donor; for beta-elimination activity) is an active-site residue. Positions 90, 109, and 150 each coordinate DNA. The FPG-type zinc-finger motif lies at 235-269 (QVYGKAGEPCPECGEAIQEQKIGQRNTFYCSYCQC). Catalysis depends on arginine 259, which acts as the Proton donor; for delta-elimination activity.

It belongs to the FPG family. As to quaternary structure, monomer. Zn(2+) is required as a cofactor.

It catalyses the reaction Hydrolysis of DNA containing ring-opened 7-methylguanine residues, releasing 2,6-diamino-4-hydroxy-5-(N-methyl)formamidopyrimidine.. The catalysed reaction is 2'-deoxyribonucleotide-(2'-deoxyribose 5'-phosphate)-2'-deoxyribonucleotide-DNA = a 3'-end 2'-deoxyribonucleotide-(2,3-dehydro-2,3-deoxyribose 5'-phosphate)-DNA + a 5'-end 5'-phospho-2'-deoxyribonucleoside-DNA + H(+). In terms of biological role, involved in base excision repair of DNA damaged by oxidation or by mutagenic agents. Acts as a DNA glycosylase that recognizes and removes damaged bases. Has a preference for oxidized purines, such as 7,8-dihydro-8-oxoguanine (8-oxoG). Has AP (apurinic/apyrimidinic) lyase activity and introduces nicks in the DNA strand. Cleaves the DNA backbone by beta-delta elimination to generate a single-strand break at the site of the removed base with both 3'- and 5'-phosphates. This Vibrio vulnificus (strain CMCP6) protein is Formamidopyrimidine-DNA glycosylase.